We begin with the raw amino-acid sequence, 565 residues long: MAKLWFKFQRYFRRKPVRFFTFLALYLTAGSLVFLHSGFVGQPAVSGNQANPAAAGGPAEGAELSFLGDMHLGRGFRDTGEASSIARRYGPWFKGKDGNERAKLGDYGGAWSRALKGRVVREKEEERAKYIGCYLDDTQSRALRGVSFFDYKKMTIFRCQDNCAERGYLYGGLEFGAECYCGHKIQATNVSEAECDMECKGERGSVCGGANRLSVYRLQLAQESARRYGSAVFRGCFRRPDNLSLALPVTAAMLNMSVDKCVDFCTEKEYPLAALAGTACHCGFPTTRFPLHDREDEQLCAQKCSAEEFESCGTPSYFIVYQTQVQDNRCMDRRFLPGKSKQLIALASFPGAGNTWARHLIELATGFYTGSYYFDGSLYNKGFKGERDHWRSGRTICIKTHESGQKEIEAFDAAILLIRNPYKALMAEFNRKYGGHIGFAAHAHWKGKEWPEFVRNYAPWWATHTLDWLKFGKKVLVVHFEDLKQDLFVQLGRMVSLLGVAVREDRLLCVESQKDGNFKRSGLRKLEYDPYTADMQKTISAYIKMVDAALKGRNLTGVPDDYYPR.

The Cytoplasmic portion of the chain corresponds to 1–18 (MAKLWFKFQRYFRRKPVR). The helical; Signal-anchor for type II membrane protein transmembrane segment at 19-41 (FFTFLALYLTAGSLVFLHSGFVG) threads the bilayer. At 42–565 (QPAVSGNQAN…TGVPDDYYPR (524 aa)) the chain is on the extracellular side. WSC domains lie at 127–219 (RAKY…YRLQ) and 230–324 (SAVF…YQTQ). Asn-189 and Asn-242 each carry an N-linked (GlcNAc...) asparagine glycan.

The protein belongs to the WSCD family.

The protein localises to the golgi apparatus membrane. Sialate:O-sulfotransferase which catalyzes 8-O-sulfation at the Sia-glycan level using 3'-phosphoadenosine 5'-phosphosulfate (PAPS) as a donor, forming 8-O-sulfated Sia (Sia8S)-glycans. Displays selectivity toward glycoproteins such as TF/transferrin. This Homo sapiens (Human) protein is Sialate:O-sulfotransferase 2 (WSCD2).